The sequence spans 288 residues: UTP--glucose-1-phosphate uridylyltransferase (288 aa).

It belongs to the UDPGP type 2 family.

The catalysed reaction is alpha-D-glucose 1-phosphate + UTP + H(+) = UDP-alpha-D-glucose + diphosphate. It functions in the pathway glycolipid metabolism; diglucosyl-diacylglycerol biosynthesis. Catalyzes the formation of UDP-glucose from glucose-1-phosphate and UTP. This is an intermediate step in the biosynthesis of diglucosyl-diacylglycerol (Glc2-DAG), i.e. the predominant glycolipid found in the S.aureus membrane, which is also used as a membrane anchor for lipoteichoic acid (LTA). The protein is UTP--glucose-1-phosphate uridylyltransferase (gtaB) of Staphylococcus aureus (strain USA300).